Consider the following 242-residue polypeptide: Type III pantothenate kinase (242 aa).

7–14 (DNSNTRTK) contacts ATP. Residues Y88 and 95–98 (GADR) each bind substrate. D97 (proton acceptor) is an active-site residue. D117 serves as a coordination point for K(+). ATP is bound at residue T120. T172 serves as a coordination point for substrate.

This sequence belongs to the type III pantothenate kinase family. Homodimer. It depends on NH4(+) as a cofactor. K(+) is required as a cofactor.

The protein localises to the cytoplasm. It carries out the reaction (R)-pantothenate + ATP = (R)-4'-phosphopantothenate + ADP + H(+). It functions in the pathway cofactor biosynthesis; coenzyme A biosynthesis; CoA from (R)-pantothenate: step 1/5. Catalyzes the phosphorylation of pantothenate (Pan), the first step in CoA biosynthesis. The protein is Type III pantothenate kinase of Akkermansia muciniphila (strain ATCC BAA-835 / DSM 22959 / JCM 33894 / BCRC 81048 / CCUG 64013 / CIP 107961 / Muc).